The sequence spans 157 residues: Small ribosomal subunit protein uS7 (157 aa).

The protein belongs to the universal ribosomal protein uS7 family. As to quaternary structure, part of the 30S ribosomal subunit. Contacts proteins S9 and S11.

In terms of biological role, one of the primary rRNA binding proteins, it binds directly to 16S rRNA where it nucleates assembly of the head domain of the 30S subunit. Is located at the subunit interface close to the decoding center, probably blocks exit of the E-site tRNA. In Borrelia garinii subsp. bavariensis (strain ATCC BAA-2496 / DSM 23469 / PBi) (Borreliella bavariensis), this protein is Small ribosomal subunit protein uS7.